Consider the following 432-residue polypeptide: MVKLSIVLTPQFLSHDQGQLTKELQQHVKSVTCPCEYLRKVINSLAVYRHRETDFGVGVRDHPGQHGKTPSPQKLDNLIIIIIGFLRCYTFNILFCTSCLCVSFLKTIFWSRNGHDGSMDVQQRAWRSNRSRQKGLRSICMHTKKRVSSFRGNKIGLKDVITLRRHVETKVRAKIRKRKVTTKINRHDKINGKRKTARKQKMFQRAQELRRRAEDYHKCKIPPSARKPLCNWVRMAAAEHRHSSGLPYWLYLTAETLKNRMGRQPPPPTQQHSITDNSLSLKTPPECLLTPLPPSVDDNIKECPLAPLPPSPLPPSVDDNLKECLFVPLPPSPLPPSVDDNLKECLFVPLPPSPLPPSVDDNLKTPPLATQEAEVEKPPKPKRWRVDEVEQSPKPKRQREAEAQQLPKPKRRRLSKLRTRHCTQAWAIRINP.

Disordered regions lie at residues 260–280 (RMGR…NSLS) and 353–420 (SPLP…LRTR). Over residues 270–280 (QQHSITDNSLS) the composition is skewed to polar residues. Residues 374–402 (EVEKPPKPKRWRVDEVEQSPKPKRQREAE) are compositionally biased toward basic and acidic residues. Residues 408 to 420 (KPKRRRLSKLRTR) show a composition bias toward basic residues.

This sequence belongs to the NPIP family.

The polypeptide is Nuclear pore complex-interacting protein family member B8 (NPIPB8) (Homo sapiens (Human)).